Consider the following 220-residue polypeptide: Ribosomal RNA small subunit methyltransferase Nep1 (220 aa).

S-adenosyl-L-methionine is bound by residues glycine 178, glycine 183, and 196-201 (LYREPL).

This sequence belongs to the class IV-like SAM-binding methyltransferase superfamily. RNA methyltransferase NEP1 family. Homodimer.

The catalysed reaction is a pseudouridine in rRNA + S-adenosyl-L-methionine = an N(1)-methylpseudouridine in rRNA + S-adenosyl-L-homocysteine + H(+). Methyltransferase involved in ribosomal biogenesis. Specifically catalyzes the N1-methylation of the pseudouridine corresponding to position 914 in M.jannaschii 16S rRNA. This chain is Ribosomal RNA small subunit methyltransferase Nep1, found in Thermococcus kodakarensis (strain ATCC BAA-918 / JCM 12380 / KOD1) (Pyrococcus kodakaraensis (strain KOD1)).